The sequence spans 118 residues: Small ribosomal subunit protein uS13 (118 aa).

The segment at 94-118 is disordered; the sequence is SLPLRGQRTKTNARTRKGPRKPIRK.

Belongs to the universal ribosomal protein uS13 family. Part of the 30S ribosomal subunit. Forms a loose heterodimer with protein S19. Forms two bridges to the 50S subunit in the 70S ribosome.

In terms of biological role, located at the top of the head of the 30S subunit, it contacts several helices of the 16S rRNA. In the 70S ribosome it contacts the 23S rRNA (bridge B1a) and protein L5 of the 50S subunit (bridge B1b), connecting the 2 subunits; these bridges are implicated in subunit movement. Contacts the tRNAs in the A and P-sites. The protein is Small ribosomal subunit protein uS13 of Shewanella violacea (strain JCM 10179 / CIP 106290 / LMG 19151 / DSS12).